A 327-amino-acid polypeptide reads, in one-letter code: Regulatory protein MsrR (327 aa).

The span at 1 to 18 (MDKETNDNEYRRQSEHRT) shows a compositional bias: basic and acidic residues. A disordered region spans residues 1 to 24 (MDKETNDNEYRRQSEHRTSAPKRK). Over 1–31 (MDKETNDNEYRRQSEHRTSAPKRKKKKKIRK) the chain is Cytoplasmic. A helical; Signal-anchor for type II membrane protein transmembrane segment spans residues 32–52 (LPIILLIVVILLIALVVYIVH). The Extracellular portion of the chain corresponds to 53–327 (SYNSGVEYAK…QAIKDFLDED (275 aa)).

The protein belongs to the LytR/CpsA/Psr (LCP) family.

Its subcellular location is the cell membrane. Functionally, involved in SarA attenuation. Affects resistance to oxacillin and teicoplanin, as well as the synthesis of virulence factors. The chain is Regulatory protein MsrR (msrR) from Staphylococcus aureus (strain Mu50 / ATCC 700699).